We begin with the raw amino-acid sequence, 332 residues long: Chorismate synthase (332 aa).

R46 lines the NADP(+) pocket. FMN contacts are provided by residues 123–125, G253, 268–272, and R295; these read HFS and KPTSS.

This sequence belongs to the chorismate synthase family. As to quaternary structure, homotetramer. It depends on FMNH2 as a cofactor.

It catalyses the reaction 5-O-(1-carboxyvinyl)-3-phosphoshikimate = chorismate + phosphate. It functions in the pathway metabolic intermediate biosynthesis; chorismate biosynthesis; chorismate from D-erythrose 4-phosphate and phosphoenolpyruvate: step 7/7. Catalyzes the anti-1,4-elimination of the C-3 phosphate and the C-6 proR hydrogen from 5-enolpyruvylshikimate-3-phosphate (EPSP) to yield chorismate, which is the branch point compound that serves as the starting substrate for the three terminal pathways of aromatic amino acid biosynthesis. This reaction introduces a second double bond into the aromatic ring system. The sequence is that of Chorismate synthase from Chitinophaga pinensis (strain ATCC 43595 / DSM 2588 / LMG 13176 / NBRC 15968 / NCIMB 11800 / UQM 2034).